We begin with the raw amino-acid sequence, 677 residues long: UvrABC system protein B (677 aa).

One can recognise a Helicase ATP-binding domain in the interval 27–414 (ANLGHGVRDQ…SQGVIAEQII (388 aa)). ATP is bound at residue 40 to 47 (GVTGSGKT). A Beta-hairpin motif is present at residues 93-116 (YYDYYQPEAYVPASDTYIEKDSSI). Positions 432 to 594 (QVDDLLAECR…IEPRTIRKSL (163 aa)) constitute a Helicase C-terminal domain. In terms of domain architecture, UVR spans 638–673 (AKHIQKLEREMREAAKELEFERAATLRDRIRLLRER).

The protein belongs to the UvrB family. As to quaternary structure, forms a heterotetramer with UvrA during the search for lesions. Interacts with UvrC in an incision complex.

It localises to the cytoplasm. Functionally, the UvrABC repair system catalyzes the recognition and processing of DNA lesions. A damage recognition complex composed of 2 UvrA and 2 UvrB subunits scans DNA for abnormalities. Upon binding of the UvrA(2)B(2) complex to a putative damaged site, the DNA wraps around one UvrB monomer. DNA wrap is dependent on ATP binding by UvrB and probably causes local melting of the DNA helix, facilitating insertion of UvrB beta-hairpin between the DNA strands. Then UvrB probes one DNA strand for the presence of a lesion. If a lesion is found the UvrA subunits dissociate and the UvrB-DNA preincision complex is formed. This complex is subsequently bound by UvrC and the second UvrB is released. If no lesion is found, the DNA wraps around the other UvrB subunit that will check the other stand for damage. This is UvrABC system protein B from Nitratidesulfovibrio vulgaris (strain ATCC 29579 / DSM 644 / CCUG 34227 / NCIMB 8303 / VKM B-1760 / Hildenborough) (Desulfovibrio vulgaris).